A 1346-amino-acid polypeptide reads, in one-letter code: DNA-directed RNA polymerase subunit beta (1346 aa).

It belongs to the RNA polymerase beta chain family. The RNAP catalytic core consists of 2 alpha, 1 beta, 1 beta' and 1 omega subunit. When a sigma factor is associated with the core the holoenzyme is formed, which can initiate transcription.

It catalyses the reaction RNA(n) + a ribonucleoside 5'-triphosphate = RNA(n+1) + diphosphate. In terms of biological role, DNA-dependent RNA polymerase catalyzes the transcription of DNA into RNA using the four ribonucleoside triphosphates as substrates. This Psychromonas ingrahamii (strain DSM 17664 / CCUG 51855 / 37) protein is DNA-directed RNA polymerase subunit beta.